Reading from the N-terminus, the 142-residue chain is MAKENAEFKEYEKLLDQAYEQLPDKIFEAKRFKVPKGYSVIQGNRTIIKNFGDVSRTLNRDPQHVLKYLLRELGTSGNVEGNRAILQGKFTHYVINDRVKEYVDNFVMCHECNRPDTVIIREDRIDMLKCSACGARAPLKSL.

It belongs to the eIF-2-beta/eIF-5 family. In terms of assembly, heterotrimer composed of an alpha, a beta and a gamma chain.

Functionally, eIF-2 functions in the early steps of protein synthesis by forming a ternary complex with GTP and initiator tRNA. The sequence is that of Translation initiation factor 2 subunit beta from Methanosphaera stadtmanae (strain ATCC 43021 / DSM 3091 / JCM 11832 / MCB-3).